Here is an 801-residue protein sequence, read N- to C-terminus: Cation/H(+) antiporter 28 (801 aa).

Helical transmembrane passes span 24-44 (ALKILVFIAIFVVRTLLHYLM), 77-97 (SITLNNIIEFGMICHMFVMGL), 113-133 (FIAYTSMITTFVLAFVTTPFL), 140-160 (PYIFSLALSLMASSTGSPILT), 179-199 (AAGVHTDMISTLLYCFGFIFF), 216-236 (LLMFCLFLAQVTFTSIVSPIF), 252-272 (GSHLVMSLAFVVLICSFPTWP), 275-292 (SMYNPILSAFTAGLFLPN), 304-324 (INYLLSTVFYPIFFFWVGFII), 343-363 (LLGTVIAGKVTGTVLCGLLLG), 371-391 (SLGLLLTTKGHFHVYLAALAI), and 403-423 (LIIFIIVFTVVYSPFVVMDII).

It belongs to the monovalent cation:proton antiporter 2 (CPA2) transporter (TC 2.A.37) family. CHX (TC 2.A.37.4) subfamily. Specifically expressed in pollen.

It is found in the membrane. Functionally, may operate as a cation/H(+) antiporter. This is Cation/H(+) antiporter 28 (CHX28) from Arabidopsis thaliana (Mouse-ear cress).